A 280-amino-acid polypeptide reads, in one-letter code: Dexamethasone-induced Ras-related protein 1 (280 aa).

Cys-11 carries the S-nitrosocysteine modification. 31–38 lines the GTP pocket; that stretch reads GSSKVGKT. The Effector region signature appears at 53-61; that stretch reads YTPTIEDFH. Residues 78 to 82 and 145 to 148 contribute to the GTP site; these read DTSGN and NKGD. Cys-277 bears the Cysteine methyl ester mark. Cys-277 is lipidated: S-farnesyl cysteine. The propeptide at 278–280 is removed in mature form; sequence VIS.

The protein belongs to the small GTPase superfamily. RasD family. As to quaternary structure, component of a complex, at least composed of APBB1, RASD1/DEXRAS1 and APP. Interacts with APBB1/FE65. Forms a ternary complex with CAPON and NOS1. Post-translationally, S-nitrosylation stimulates guanine-nucleotide exchange activity. As to expression, expressed in brain, heart, kidney and liver.

It is found in the cell membrane. The protein localises to the cytoplasm. It localises to the perinuclear region. The protein resides in the nucleus. Functionally, small GTPase. Negatively regulates the transcription regulation activity of the APBB1/FE65-APP complex via its interaction with APBB1/FE65. The polypeptide is Dexamethasone-induced Ras-related protein 1 (Rasd1) (Mus musculus (Mouse)).